Consider the following 136-residue polypeptide: UPF0299 membrane protein PM0880 (136 aa).

The next 4 membrane-spanning stretches (helical) occupy residues 5 to 25, 29 to 49, 67 to 87, and 92 to 112; these read IVDL…GEWI, LNIG…GLTF, YMAL…DVLF, and VLLL…GLLS.

This sequence belongs to the UPF0299 family.

It is found in the cell inner membrane. The sequence is that of UPF0299 membrane protein PM0880 from Pasteurella multocida (strain Pm70).